A 143-amino-acid polypeptide reads, in one-letter code: Large ribosomal subunit protein uL11 (143 aa).

This sequence belongs to the universal ribosomal protein uL11 family. In terms of assembly, part of the ribosomal stalk of the 50S ribosomal subunit. Interacts with L10 and the large rRNA to form the base of the stalk. L10 forms an elongated spine to which L12 dimers bind in a sequential fashion forming a multimeric L10(L12)X complex. In terms of processing, one or more lysine residues are methylated.

Its function is as follows. Forms part of the ribosomal stalk which helps the ribosome interact with GTP-bound translation factors. This chain is Large ribosomal subunit protein uL11, found in Bifidobacterium longum subsp. infantis (strain ATCC 15697 / DSM 20088 / JCM 1222 / NCTC 11817 / S12).